Here is a 185-residue protein sequence, read N- to C-terminus: Homeobox protein TGIF2LY (185 aa).

Disordered stretches follow at residues 1 to 58 (MEAA…GNLP) and 166 to 185 (RCQE…SSPE). Residues 21–39 (AKTQSPAQDTSIMSRNNAD) show a composition bias toward polar residues. Positions 48–111 (EHKKKRKGNL…INARRRILPD (64 aa)) form a DNA-binding region, homeobox; TALE-type.

Belongs to the TALE/TGIF homeobox family. In terms of tissue distribution, specifically expressed in adult testis.

It is found in the nucleus. In terms of biological role, may have a transcription role in testis. May act as a competitor/regulator of TGIF2LX. The polypeptide is Homeobox protein TGIF2LY (TGIF2LY) (Homo sapiens (Human)).